Consider the following 773-residue polypeptide: C-Maf-inducing protein (773 aa).

The tract at residues M1 to P30 is disordered. The PH domain occupies L54–Y163. Residues S349, S377, S382, and S660 each carry the phosphoserine modification. LRR repeat units lie at residues N663–P686, S687–S707, M712–S732, and S736–K756.

In terms of assembly, interacts with FLNA. In terms of tissue distribution, isoform 1 is expressed in peripheral blood mononuclear cells and kidney. Lower expression in brain and liver. Expression is down-regulated in activated cells. Isoform 2 is expressed in lymphocyte precursors, however, expression shuts down during maturation and differentiation in thymus and fetal liver.

The protein localises to the nucleus. It localises to the cytoplasm. Functionally, plays a role in T-cell signaling pathway. Isoform 2 may play a role in T-helper 2 (Th2) signaling pathway and seems to represent the first proximal signaling protein that links T-cell receptor-mediated signal to the activation of c-Maf Th2 specific factor. This Homo sapiens (Human) protein is C-Maf-inducing protein (CMIP).